The following is a 541-amino-acid chain: Tyrosine-protein kinase Yes (541 aa).

The span at 1–20 (MGCIKSKEDKGPAMKYRTDN) shows a compositional bias: basic and acidic residues. Residues 1–43 (MGCIKSKEDKGPAMKYRTDNTPEPISSHVSHYGSDSSQATQSP) are disordered. A lipid anchor (N-myristoyl glycine) is attached at glycine 2. A lipid anchor (S-palmitoyl cysteine; in membrane form) is attached at cysteine 3. Low complexity predominate over residues 26 to 37 (SSHVSHYGSDSS). Residues 89-150 (GGVTVFVALY…PSNYVAPADS (62 aa)) enclose the SH3 domain. An SH2 domain is found at 156 to 253 (WYFGKMGRKD…GLCHKLTTVC (98 aa)). The 254-residue stretch at 275-528 (LRLEVKLGQG…YIQSFLEDYF (254 aa)) folds into the Protein kinase domain. ATP contacts are provided by residues 281 to 289 (LGQGCFGEV) and lysine 303. The Proton acceptor role is filled by aspartate 394. Tyrosine 424 is modified (phosphotyrosine; by autocatalysis). Phosphotyrosine; by CSK is present on tyrosine 535.

It belongs to the protein kinase superfamily. Tyr protein kinase family. SRC subfamily. Autophosphorylation at Tyr-424 maintains enzyme activity. Post-translationally, palmitoylation at Cys-3 promotes membrane localization.

It is found in the cell membrane. The protein localises to the cytoplasm. It localises to the cytoskeleton. The protein resides in the microtubule organizing center. Its subcellular location is the centrosome. It is found in the cytosol. The protein localises to the cell junction. It catalyses the reaction L-tyrosyl-[protein] + ATP = O-phospho-L-tyrosyl-[protein] + ADP + H(+). Non-receptor protein tyrosine kinase that is involved in the regulation of cell growth and survival, apoptosis, cell-cell adhesion, cytoskeleton remodeling, differentiation, G2/M progression and cytokinesis. The protein is Tyrosine-protein kinase Yes (YES1) of Gallus gallus (Chicken).